A 288-amino-acid chain; its full sequence is Polyisoprenoid diphosphate/phosphate phosphohydrolase PLPP6 (288 aa).

The tract at residues 1 to 82 is disordered; it reads MPSPKARSGS…STGGGGQQLP (82 aa). Topologically, residues 1 to 127 are cytoplasmic; it reads MPSPKARSGS…EDSSWGSVRP (127 aa). The helical transmembrane segment at 128-148 threads the bilayer; the sequence is LMKLIEVSGHGIPWLAGAAYC. Over 149 to 161 the chain is Lumenal; that stretch reads LYKSDSPAGQEVM. Residues 162-182 form a helical membrane-spanning segment; it reads LNLLMALVLDVVLVGVLKAVV. Residues 179 to 187 form a phosphatase sequence motif I region; that stretch reads KAVVRRRRP. Residues 183 to 223 lie on the Cytoplasmic side of the membrane; it reads RRRRPAHNRMDMFATFSVDSYSFPSGHATRAAMCARFLLNH. Positions 206-209 are phosphatase sequence motif II; that stretch reads PSGH. Histidine 209 acts as the Proton donors in catalysis. Residues 224–244 traverse the membrane as a helical segment; sequence LVLAAPLRVLVLLWATIVGFS. The tract at residues 244–255 is phosphatase sequence motif III; the sequence is SRVLLGRHNVTD. At 245-255 the chain is on the lumenal side; the sequence is RVLLGRHNVTD. The active-site Nucleophile is the histidine 251. Residues 256–276 traverse the membrane as a helical segment; that stretch reads VAFGFFMGYWQYNLVEMLWLS. Residues 277–288 are Cytoplasmic-facing; the sequence is PVMLQSAIGQLH.

It belongs to the PA-phosphatase related phosphoesterase family.

It is found in the endoplasmic reticulum membrane. The protein resides in the nucleus envelope. It localises to the nucleus inner membrane. It catalyses the reaction presqualene diphosphate + H2O = presqualene phosphate + phosphate + H(+). The catalysed reaction is presqualene phosphate + H2O = presqualene alcohol + phosphate. It carries out the reaction (2E,6E)-farnesyl diphosphate + H2O = (2E,6E)-farnesyl phosphate + phosphate + H(+). The enzyme catalyses (2E,6E)-farnesyl phosphate + H2O = (2E,6E)-farnesol + phosphate. It catalyses the reaction (2E,6E,10E)-geranylgeranyl diphosphate + H2O = (2E,6E,10E)-geranylgeranyl phosphate + phosphate + H(+). The catalysed reaction is (2E,6E,10E)-geranylgeranyl phosphate + H2O = (2E,6E,10E)-geranylgeraniol + phosphate. It carries out the reaction (2E)-geranyl diphosphate + H2O = (2E)-geranyl phosphate + phosphate + H(+). The enzyme catalyses (2E)-geranyl phosphate + H2O = (2E)-geraniol + phosphate. It catalyses the reaction 1,2-dihexadecanoyl-sn-glycero-3-phosphate + H2O = 1,2-dihexadecanoyl-sn-glycerol + phosphate. In terms of biological role, magnesium-independent polyisoprenoid diphosphatase that catalyzes the sequential dephosphorylation of presqualene, farnesyl, geranyl and geranylgeranyl diphosphates. May regulate the biosynthesis of cholesterol and related sterols by dephosphorylating presqualene and farnesyl diphosphate, two key intermediates in this biosynthetic pathway. May also play a role in protein prenylation by acting on farnesyl diphosphate and its derivative geranylgeranyl diphosphate, two precursors for the addition of isoprenoid anchors to membrane proteins. Has a lower activity towards phosphatidic acid (PA), but through phosphatidic acid dephosphorylation may participate in the biosynthesis of phospholipids and triacylglycerols. May also act on ceramide-1-P, lysophosphatidic acid (LPA) and sphing-4-enine 1-phosphate/sphingosine-1-phosphate. The polypeptide is Polyisoprenoid diphosphate/phosphate phosphohydrolase PLPP6 (plpp6) (Danio rerio (Zebrafish)).